Here is a 301-residue protein sequence, read N- to C-terminus: Sulfate adenylyltransferase subunit 2 1 (301 aa).

Belongs to the PAPS reductase family. CysD subfamily. In terms of assembly, heterodimer composed of CysD, the smaller subunit, and CysN.

The catalysed reaction is sulfate + ATP + H(+) = adenosine 5'-phosphosulfate + diphosphate. Its pathway is sulfur metabolism; hydrogen sulfide biosynthesis; sulfite from sulfate: step 1/3. With CysN forms the ATP sulfurylase (ATPS) that catalyzes the adenylation of sulfate producing adenosine 5'-phosphosulfate (APS) and diphosphate, the first enzymatic step in sulfur assimilation pathway. APS synthesis involves the formation of a high-energy phosphoric-sulfuric acid anhydride bond driven by GTP hydrolysis by CysN coupled to ATP hydrolysis by CysD. This is Sulfate adenylyltransferase subunit 2 1 from Shewanella sediminis (strain HAW-EB3).